A 396-amino-acid chain; its full sequence is Alanine racemase (396 aa).

The active-site Proton acceptor; specific for D-alanine is K46. The residue at position 46 (K46) is an N6-(pyridoxal phosphate)lysine. R145 provides a ligand contact to substrate. The active-site Proton acceptor; specific for L-alanine is the Y280. Substrate is bound at residue M328.

The protein belongs to the alanine racemase family. It depends on pyridoxal 5'-phosphate as a cofactor.

It catalyses the reaction L-alanine = D-alanine. Its pathway is amino-acid biosynthesis; D-alanine biosynthesis; D-alanine from L-alanine: step 1/1. Functionally, catalyzes the interconversion of L-alanine and D-alanine. May also act on other amino acids. The sequence is that of Alanine racemase (alr) from Brucella suis (strain ATCC 23445 / NCTC 10510).